A 375-amino-acid chain; its full sequence is N-acetylneuraminate epimerase (375 aa).

The N-terminal stretch at 1 to 22 is a signal peptide; the sequence is MKLTKTALCTALFATFTFSANA. Kelch repeat units lie at residues 43–87, 89–140, 142–176, 177–222, 225–273, 295–344, and 346–375; these read TVYV…AAVD, KLYV…ASHG, KVYI…EIAA, AYFD…TIQG, LVVV…LAGA, KQYK…SYNN, and VLLI…LTIE. Residue glutamate 231 is the Proton acceptor of the active site.

It belongs to the NanM family. As to quaternary structure, homodimer.

The protein resides in the periplasm. It carries out the reaction N-acetyl-alpha-neuraminate = N-acetyl-beta-neuraminate. Functionally, converts alpha-N-acetylneuranimic acid (Neu5Ac) to the beta-anomer, accelerating the equilibrium between the alpha- and beta-anomers. Probably facilitates sialidase-negative bacteria to compete successfully for limited amounts of extracellular Neu5Ac, which is likely taken up in the beta-anomer. In addition, the rapid removal of sialic acid from solution might be advantageous to the bacterium to damp down host responses. The chain is N-acetylneuraminate epimerase from Haemophilus influenzae (strain PittEE).